The following is a 212-amino-acid chain: Large ribosomal subunit protein mL48 (212 aa).

The transit peptide at M1–T28 directs the protein to the mitochondrion. Residue K199 is modified to N6-succinyllysine.

This sequence belongs to the mitochondrion-specific ribosomal protein mL48 family. In terms of assembly, component of the mitochondrial ribosome large subunit (39S) which comprises a 16S rRNA and about 50 distinct proteins. Interacts with OXA1L.

Its subcellular location is the mitochondrion. In Bos taurus (Bovine), this protein is Large ribosomal subunit protein mL48 (MRPL48).